An 88-amino-acid chain; its full sequence is Small ribosomal subunit protein uS15c (88 aa).

Belongs to the universal ribosomal protein uS15 family. Part of the 30S ribosomal subunit.

The protein localises to the plastid. Its subcellular location is the chloroplast. This is Small ribosomal subunit protein uS15c (rps15) from Angiopteris evecta (Mule's foot fern).